The following is a 224-amino-acid chain: Probable Brix domain-containing ribosomal biogenesis protein (224 aa).

The Brix domain maps to 1–196 (MMLITTSHRP…IWIMEDGRRW (196 aa)).

Probably involved in the biogenesis of the ribosome. This chain is Probable Brix domain-containing ribosomal biogenesis protein, found in Pyrococcus abyssi (strain GE5 / Orsay).